The following is a 572-amino-acid chain: MHLENRVLSSVLDYASKFYKRMSSLVFFSANSIQVQMNISQSSWIKCRDWMAFALSHHIIMGIYLLILRNFLPQVVPDFEWQHYFMRVFIVHIIYIIISYFIRITRYPPGPPPMAVFGNSPFVNILTPEQTFLEYREIYGPIFTLHLSQPTIILAEYKTIQEALVKNGQQTSGRSSAESFVLFTGDRLNGDGVILAMRQKWKDMRHEISRFMNKWYGAPMDELVLHHTRCLEQELAKIAETKSLIDLRDPLAGAIANVIQQITIGRNYMYQDQEFQTQLRDINAVVKEIMTAEVFFVNCYPWLRYLPEGILRKWTNYKRSGFRLQQWFRTILEEHHVNRHQGDFMSHMIDLQESKQEQFRDLSIILTCGDMWTGGMETTVTTLRWGIIYLLNNPEVQAKCQMEILDVFGNDIPDMGKMNQTPYVRATLSEIQRLANVLPWAIPHKTIEECNIGGYDIPVNTEIIPALGAVLFDPNVFESPKQFKPERFLDEEGKYRVMEEFRPFGLGPRVCLGERIARTELYLIFASLLQNFRFYLNRGDPIPVAERVIGGITAPPKPYATRVEYLGNRLIN.

Transmembrane regions (helical) follow at residues 52 to 72 (AFAL…RNFL) and 84 to 104 (YFMR…FIRI).

It belongs to the cytochrome P450 family. In terms of tissue distribution, expressed in the 2 embryonic head hypodermal cells XXXL/R.

It is found in the membrane. It catalyses the reaction 5alpha-cholest-7-en-3-one + 3 reduced [NADPH--hemoprotein reductase] + 3 O2 = (25S)-Delta7-dafachronate + 3 oxidized [NADPH--hemoprotein reductase] + 4 H2O + 4 H(+). The catalysed reaction is cholest-4-en-3-one + 3 reduced [NADPH--hemoprotein reductase] + 3 O2 = (25S)-3-oxocholest-4-en-26-oate + 3 oxidized [NADPH--hemoprotein reductase] + 4 H2O + 4 H(+). Its pathway is steroid hormone biosynthesis; dafachronic acid biosynthesis. In terms of biological role, converts the 3-keto steroids 4-cholesten-3-one and lathosterone into the carboxylic metabolites 3-keto-4-cholestenate (Delta(4)-dafachronic acid, Delta(4)-DA) and 3-keto-7,(5a)-cholestenate (Delta(7)-dafachronic acid, Delta(7)-DA) respectively, by catalyzing successive oxidations at C-26. Dafachronic acids bind directly to the nuclear hormone receptor (NHR) DAF-12, suppressing dauer formation and inducing reproductive growth. In a non-cell autonomous manner, negatively regulates body wall muscle arm extensions to motor neurons probably by preventing daf-12 isoform b activation. May be involved in thermotolerance. The sequence is that of 3-ketosteroid oxygenase (daf-9) from Caenorhabditis elegans.